An 862-amino-acid polypeptide reads, in one-letter code: AP-1 complex subunit gamma-2 (862 aa).

11 HEAT repeats span residues 1–28, 29–65, 101–136, 137–173, 308–345, 346–382, 384–417, 418–454, 458–496, 507–545, and 560–599; these read MNPF…EERA, VVRK…LGYP, EVLM…CSAE, MARD…KVPD, GLRV…VDSQ, AVQR…ENNV, PLAK…KFAP, EKIW…NAPD, YTVR…NNAG, TESD…RFPS, and SFVL…ATFS. The 116-residue stretch at 744 to 859 folds into the GAE domain; sequence AAYPSIVAFE…LEEGQINNFP (116 aa).

The protein belongs to the adaptor complexes large subunit family. As to quaternary structure, adaptor protein complex 1 (AP-1) is a heterotetramer composed of two large adaptins (gamma-type subunit and beta-type subunit), a medium adaptin (mu-type subunit) and a small adaptin (sigma-type subunit).

It localises to the golgi apparatus. Its subcellular location is the cytoplasmic vesicle. The protein resides in the clathrin-coated vesicle membrane. Functionally, subunit of clathrin-associated adaptor protein complex 1 that plays a role in protein sorting at the trans-Golgi network and early endosomes (TGN/EE). The AP complexes mediate both the recruitment of clathrin to membranes and the recognition of sorting signals within the cytosolic tails of transmembrane cargo molecules. The polypeptide is AP-1 complex subunit gamma-2 (Arabidopsis thaliana (Mouse-ear cress)).